Consider the following 485-residue polypeptide: uncharacterized protein (485 aa).

Residues 151–201 (IKAPTNNSQSGDGNGGTNNDNLLGTFDIREKSNGKKGESNGKQGNGQDKKT) are disordered. Positions 155-174 (TNNSQSGDGNGGTNNDNLLG) are enriched in low complexity. Positions 177–189 (DIREKSNGKKGES) are enriched in basic and acidic residues.

This sequence belongs to the MG185/MG260 family.

This is an uncharacterized protein from Mycoplasma pneumoniae (strain ATCC 29342 / M129 / Subtype 1) (Mycoplasmoides pneumoniae).